The chain runs to 666 residues: MRKINLLDLETTNKIAAGEVIERPFSVVKELVENSIDAGAKNITIEIEDGGQNLIKIIDDGEGIYPIDIKNAFLPHATSKINSIEDIYKISTMGFRGEALASISSVSKTKLKSRVDSYNFGKEIYIEGGKIEYLKDTGCNVGTTIEVSDLFYNVPARLKFLKSARSDSSSISDIVNRFILAHPDISFNLINKGKQSIKSYGTGNLKDSIRCVYNKTISENLINFESHKDIISVYGFIGKPEISRKSRTNQSIFVNKRYVKSKFITAAVENAFKSFLTVNSYPFFVIFIDIFPEYIDVNVHPTKSEVKFKDERAMFKTIFDAVHEAIKGELKESFTNFFNKEDINMYDSEKSIAETIKLEKEEVQIPIDLNSNNKIDIFGNNINKLPNNAELLKNIGIKEKNTLENNNNFYTSKQNEICYTNKNDECLNSCNKDDYSKIEKPLQKDNKNLDALYLNEHNTNSSPINIKENKPNNFYVDMKIIGQFNNTYILIEKDKELYIIDQHAAHEKVLFEKFKSEIEKGYVISQILLSPVVIELSEDEFNIYEENKDIFKNSGFSVETFGECTINIKEVPLILGKPNVEDLFMDILYNLKNMKSKETSTIKYNAIATLACKSAVKANDNLKEEEIKKLIENMLTLNNPYTCPHGRPTMIKFTLKDLEKKFKRIQ.

This sequence belongs to the DNA mismatch repair MutL/HexB family.

In terms of biological role, this protein is involved in the repair of mismatches in DNA. It is required for dam-dependent methyl-directed DNA mismatch repair. May act as a 'molecular matchmaker', a protein that promotes the formation of a stable complex between two or more DNA-binding proteins in an ATP-dependent manner without itself being part of a final effector complex. This is DNA mismatch repair protein MutL from Clostridium botulinum (strain Kyoto / Type A2).